The chain runs to 703 residues: Phenylalanine aminomutase (L-beta-phenylalanine forming) (703 aa).

Tyrosine 79 acts as the Proton donor/acceptor in catalysis. The 5-imidazolinone (Ala-Gly) cross-link spans alanine 177 to glycine 179. Serine 178 is modified (2,3-didehydroalanine (Ser)).

Belongs to the PAL/histidase family. In terms of processing, contains an active site 4-methylidene-imidazol-5-one (MIO), which is formed autocatalytically by cyclization and dehydration of residues Ala-Ser-Gly.

It catalyses the reaction L-phenylalanine = L-beta-phenylalanine. The protein operates within mycotoxin biosynthesis. Its function is as follows. Phenylalanine aminomutase; part of the gene cluster that mediates the biosynthesis of the mycotoxin cyclochlorotine, a hepatotoxic and carcinogenic cyclic chlorinated pentapeptide. Within the pathway, cctP1 provides the uncommon building block beta-Phe from Phe. The NRPS cctN initially catalyzes the condensation of L-serine (Ser), Pro, L-2-aminobutyrate (2Abu), Ser, and beta-Phe in this order to produce isocyclotine. After the dichlorination of Pro2 catalyzed by cctP2 to produce isocyclochlorotine, the cctO-mediated transacylation of isocyclochlorotine can furnish cyclochlorotine. The subsequent hydroxylation of cyclochlorotine by cctR yields hydroxycyclochlorotine as the final product. CctP1 probably acts as a phenylalanine aminomutase and provides the uncommon building block beta-Phe. Furthermore, 2Abu can be synthesized from threonine by one of the threonine dehydratases and transaminases localized outside of the cluster. The functions of the remaining proteins encoded by the cluster, cctM and cctT, have not been identified yet. The protein is Phenylalanine aminomutase (L-beta-phenylalanine forming) of Talaromyces islandicus (Penicillium islandicum).